The primary structure comprises 82 residues: Putative Fe(2+) transport protein A (82 aa).

It belongs to the FeoA family.

Functionally, might be involved in Fe(2+) ion uptake. The protein is Putative Fe(2+) transport protein A of Leptolyngbya boryana (Plectonema boryanum).